The following is a 544-amino-acid chain: Chaperonin GroEL 1 (544 aa).

ATP contacts are provided by residues 29–32, 86–90, glycine 413, and aspartate 495; these read TLGP and DGTTT. The disordered stretch occupies residues 525-544; that stretch reads PEPKTNTPASSGSGMSDYDY. Residues 528–538 are compositionally biased toward polar residues; that stretch reads KTNTPASSGSG.

Belongs to the chaperonin (HSP60) family. In terms of assembly, forms a cylinder of 14 subunits composed of two heptameric rings stacked back-to-back. Interacts with the co-chaperonin GroES.

The protein localises to the cytoplasm. It carries out the reaction ATP + H2O + a folded polypeptide = ADP + phosphate + an unfolded polypeptide.. Its function is as follows. Together with its co-chaperonin GroES, plays an essential role in assisting protein folding. The GroEL-GroES system forms a nano-cage that allows encapsulation of the non-native substrate proteins and provides a physical environment optimized to promote and accelerate protein folding. The polypeptide is Chaperonin GroEL 1 (Synechococcus sp. (strain JA-2-3B'a(2-13)) (Cyanobacteria bacterium Yellowstone B-Prime)).